Here is a 240-residue protein sequence, read N- to C-terminus: Diglucosylglycerate octanoyltransferase (240 aa).

The protein belongs to the OctT acyltransferase family. As to quaternary structure, homotetramer.

It catalyses the reaction (2R)-2-O-[alpha-D-glucopyranosyl-(1-&gt;6)-alpha-D-glucopyranosyl]-glycerate + octanoyl-CoA = (2R)-2-O-[6-O-octanoyl-alpha-D-glucopyranosyl-(1-&gt;6)-alpha-D-glucopyranosyl]-glycerate + CoA. In terms of biological role, sugar octanoyltransferase likely involved in the biosynthesis of mycobacterial methylglucose lipopolysaccharide (MGLP). Catalyzes the transfer of an octanoyl group from octanoyl-CoA to the C6 OH of the second glucose in diglucosylglycerate (DGG). Can also use hexanoyl-CoA as acyl donor in vitro. DGG is the preferred acceptor, but to a lesser extent, GG (glucosylglycerate) can be used as substrate. DGG and GG are the two earliest intermediates in MGLP biosynthesis. In Mycolicibacterium hassiacum (strain DSM 44199 / CIP 105218 / JCM 12690 / 3849) (Mycobacterium hassiacum), this protein is Diglucosylglycerate octanoyltransferase.